The chain runs to 134 residues: Large-conductance mechanosensitive channel (134 aa).

2 consecutive transmembrane segments (helical) span residues 16 to 36 (VIDL…VTAL) and 81 to 101 (GDFI…FIVV).

This sequence belongs to the MscL family. In terms of assembly, homopentamer.

The protein resides in the cell inner membrane. Functionally, channel that opens in response to stretch forces in the membrane lipid bilayer. May participate in the regulation of osmotic pressure changes within the cell. The protein is Large-conductance mechanosensitive channel of Stenotrophomonas maltophilia (strain K279a).